A 498-amino-acid polypeptide reads, in one-letter code: Phosphonates import ATP-binding protein PhnC (498 aa).

Residues Met1 to Ala27 form a disordered region. The 242-residue stretch at Leu28 to Arg269 folds into the ABC transporter domain. Gly60–Ser67 is an ATP binding site. The tract at residues Gly270 to Pro498 is lysR substrate binding domain.

Belongs to the ABC transporter superfamily. Phosphonates importer (TC 3.A.1.9.1) family. As to quaternary structure, the complex is composed of two ATP-binding proteins (PhnC), two transmembrane proteins (PhnE) and a solute-binding protein (PhnD).

Its subcellular location is the cell inner membrane. It catalyses the reaction phosphonate(out) + ATP + H2O = phosphonate(in) + ADP + phosphate + H(+). In terms of biological role, part of the ABC transporter complex PhnCDE involved in phosphonates import. Responsible for energy coupling to the transport system. This chain is Phosphonates import ATP-binding protein PhnC, found in Anaeromyxobacter dehalogenans (strain 2CP-C).